A 728-amino-acid polypeptide reads, in one-letter code: 1,4-alpha-glucan branching enzyme GlgB (728 aa).

Catalysis depends on aspartate 405, which acts as the Nucleophile. Residue glutamate 458 is the Proton donor of the active site.

This sequence belongs to the glycosyl hydrolase 13 family. GlgB subfamily. In terms of assembly, monomer.

It catalyses the reaction Transfers a segment of a (1-&gt;4)-alpha-D-glucan chain to a primary hydroxy group in a similar glucan chain.. Its pathway is glycan biosynthesis; glycogen biosynthesis. Catalyzes the formation of the alpha-1,6-glucosidic linkages in glycogen by scission of a 1,4-alpha-linked oligosaccharide from growing alpha-1,4-glucan chains and the subsequent attachment of the oligosaccharide to the alpha-1,6 position. This is 1,4-alpha-glucan branching enzyme GlgB from Salmonella arizonae (strain ATCC BAA-731 / CDC346-86 / RSK2980).